Reading from the N-terminus, the 239-residue chain is Ribosomal RNA small subunit methyltransferase G (239 aa).

S-adenosyl-L-methionine contacts are provided by residues glycine 79, phenylalanine 84, 130–131, and arginine 149; that span reads AE.

It belongs to the methyltransferase superfamily. RNA methyltransferase RsmG family.

Its subcellular location is the cytoplasm. Specifically methylates the N7 position of a guanine in 16S rRNA. The chain is Ribosomal RNA small subunit methyltransferase G from Lactobacillus delbrueckii subsp. bulgaricus (strain ATCC BAA-365 / Lb-18).